We begin with the raw amino-acid sequence, 431 residues long: Gamma-glutamyl phosphate reductase (431 aa).

This sequence belongs to the gamma-glutamyl phosphate reductase family.

The protein localises to the cytoplasm. The catalysed reaction is L-glutamate 5-semialdehyde + phosphate + NADP(+) = L-glutamyl 5-phosphate + NADPH + H(+). It participates in amino-acid biosynthesis; L-proline biosynthesis; L-glutamate 5-semialdehyde from L-glutamate: step 2/2. Its function is as follows. Catalyzes the NADPH-dependent reduction of L-glutamate 5-phosphate into L-glutamate 5-semialdehyde and phosphate. The product spontaneously undergoes cyclization to form 1-pyrroline-5-carboxylate. This Acaryochloris marina (strain MBIC 11017) protein is Gamma-glutamyl phosphate reductase.